The following is a 376-amino-acid chain: GTPase Obg (376 aa).

An Obg domain is found at 1–158 (MFIDSVNLTL…RDVRLELKLI (158 aa)). One can recognise an OBG-type G domain in the interval 159 to 359 (ADVGLVGFPN…LKFSLLELLK (201 aa)). GTP is bound by residues 165–172 (GFPNVGKS), 190–194 (FTTLT), 212–215 (DIPG), 280–283 (TRMD), and 340–342 (SSA). 2 residues coordinate Mg(2+): Ser-172 and Thr-192.

Belongs to the TRAFAC class OBG-HflX-like GTPase superfamily. OBG GTPase family. In terms of assembly, monomer. Requires Mg(2+) as cofactor.

It is found in the cytoplasm. In terms of biological role, an essential GTPase which binds GTP, GDP and possibly (p)ppGpp with moderate affinity, with high nucleotide exchange rates and a fairly low GTP hydrolysis rate. Plays a role in control of the cell cycle, stress response, ribosome biogenesis and in those bacteria that undergo differentiation, in morphogenesis control. This chain is GTPase Obg, found in Campylobacter curvus (strain 525.92).